The following is a 78-amino-acid chain: Sec-independent protein translocase protein TatA (78 aa).

Residues 1 to 21 (MGSLSIWHWIVVLAVVLLLFG) traverse the membrane as a helical segment. The segment at 43-78 (LAEDDEPAKTPAAPPEAPRPLPHQTSSAAEAEKKPV) is disordered. Residues 54-63 (AAPPEAPRPL) show a composition bias toward pro residues.

It belongs to the TatA/E family. As to quaternary structure, the Tat system comprises two distinct complexes: a TatABC complex, containing multiple copies of TatA, TatB and TatC subunits, and a separate TatA complex, containing only TatA subunits. Substrates initially bind to the TatABC complex, which probably triggers association of the separate TatA complex to form the active translocon.

The protein localises to the cell inner membrane. Its function is as follows. Part of the twin-arginine translocation (Tat) system that transports large folded proteins containing a characteristic twin-arginine motif in their signal peptide across membranes. TatA could form the protein-conducting channel of the Tat system. This chain is Sec-independent protein translocase protein TatA, found in Xanthobacter autotrophicus (strain ATCC BAA-1158 / Py2).